The sequence spans 185 residues: Ribosome-recycling factor (185 aa).

This sequence belongs to the RRF family.

It localises to the cytoplasm. In terms of biological role, responsible for the release of ribosomes from messenger RNA at the termination of protein biosynthesis. May increase the efficiency of translation by recycling ribosomes from one round of translation to another. The polypeptide is Ribosome-recycling factor (Corynebacterium glutamicum (strain R)).